The primary structure comprises 650 residues: MICOS complex subunit MIC60, mitochondrial (650 aa).

The N-terminal 34 residues, 1 to 34, are a transit peptide targeting the mitochondrion; the sequence is MLRKSVLELSSRLSIKRFPRNLGAQRFHLSSSRN. Positions 26-74 are disordered; the sequence is RFHLSSSRNASTSGKNGLPGAKPVGKPDASKVDPPKVTPPPPTKGNSSK. A compositionally biased stretch (polar residues) spans 28-40; the sequence is HLSSSRNASTSGK. Topologically, residues 35 to 74 are mitochondrial matrix; that stretch reads ASTSGKNGLPGAKPVGKPDASKVDPPKVTPPPPTKGNSSK. The helical transmembrane segment at 75–95 threads the bilayer; it reads VVIGGVAIAGAFLVAYQTGYL. The Mitochondrial intermembrane segment spans residues 96–549; the sequence is DQYLGKEQQK…FDTLKGTLRH (454 aa). 3 disordered regions span residues 121–168, 239–267, and 284–304; these read EAHH…ESDL, QSSSVHRESETESASPKDPAALKTPEDGI, and EGSDTESTGSSSIGEQITKET. Residues 284 to 299 are compositionally biased toward low complexity; the sequence is EGSDTESTGSSSIGEQ. Coiled-coil stretches lie at residues 345 to 369 and 396 to 430; these read AQVFAEELRALKEKYENELRDLRAR and KAIQERMEDKLKAELEQKETEAQLALSKAEELAKA. A helical membrane pass occupies residues 550-570; sequence FSLIPPGGGGILAHSLAHVAS. Residues 571-650 are Mitochondrial matrix-facing; it reads SLKFKEVDQA…QSYATCVSLT (80 aa).

Belongs to the MICOS complex subunit Mic60 family. In terms of assembly, component of the mitochondrial contact site and cristae organizing system (MICOS) complex. The MICOS complex associates with mitochondrial outer membrane proteins. Present in a large lipid-enriched complex called mitochondrial transmembrane lipoprotein (MTL) complex made of proteins located in the two mitochondrial membranes, including the TOM complex and the core components of the MICOS complex and containing at least digalactosyldiacylglycerol (DGDG). Binds to TOM40-1. Component of a mitochondrial large protein complex that contains, at least, MIC60, DGS1, TOM40, TOM20 proteins, and petC/RISP.

Its subcellular location is the mitochondrion inner membrane. In terms of biological role, component of the MICOS complex, a large protein complex of the mitochondrial inner membrane that plays crucial roles in the maintenance of crista junctions, inner membrane architecture, and formation of contact sites to the outer membrane. Plays a role in keeping cristae membranes connected to the inner boundary membrane. Also promotes protein import via the mitochondrial intermembrane space assembly (MIA) pathway. Involved in the maintenance of mitochondria morphology. Binds to glycerolipids such as cardiolipin (CL). Contributes to the export of phosphatidylethanolamine (PE) from mitochondria and to the import of galactoglycerolipids from plastids during phosphate (Pi) starvation. Promotes lipid desorption from membranes, likely as an initial step for lipid transfer, and regulates probably the tethering between the inner and outer membranes of mitochondria by binding to TOM40 proteins. This Arabidopsis thaliana (Mouse-ear cress) protein is MICOS complex subunit MIC60, mitochondrial.